The following is a 279-amino-acid chain: Plasmodesmata-located protein 8 (279 aa).

Positions Met1–Ser20 are cleaved as a signal peptide. Topologically, residues Arg21–Ser253 are extracellular. 2 Gnk2-homologous domains span residues His27–Phe135 and Gly137–Tyr237. 6 disulfide bridges follow: Cys34-Cys113, Cys89-Cys98, Cys101-Cys126, Cys148-Cys215, Cys191-Cys200, and Cys203-Cys228. The chain crosses the membrane as a helical span at residues Ile254 to Cys274. The interval Ile254–Cys274 is necessary and sufficient for plasmodesmal targeting. The Cytoplasmic segment spans residues Arg275–His279.

It belongs to the cysteine-rich repeat secretory protein family. Plasmodesmata-located proteins (PDLD) subfamily. Interacts with ACBP6; interaction occurs at the plasma membrane. As to quaternary structure, (Microbial infection) Interacts with Grapevine fanleaf virus (GFLV) 2B-MP. Highly expressed in pollen, lateral root and elongation zone. Higher expression in the reproductive tissues (flowers and buds) than in vegetative organs (leaves and stems). High expression in shoot and root phloem companion cells (at protein level).

The protein resides in the cell membrane. The protein localises to the cell junction. It localises to the plasmodesma. Its function is as follows. Modulates cell-to-cell trafficking. The sequence is that of Plasmodesmata-located protein 8 from Arabidopsis thaliana (Mouse-ear cress).